Consider the following 1462-residue polypeptide: DNA topoisomerase 2 (1462 aa).

Residues N79, N108, 136 to 138 (SSN), and 149 to 156 (GRNGYGAK) contribute to the ATP site. Residues 332–334 (NKK) form an interaction with DNA region. 365–367 (QTK) lines the ATP pocket. Residues 442–556 (CTLILTEGDS…SLLKVPSFLV (115 aa)) form the Toprim domain. Residues E448, D525, and D527 each coordinate Mg(2+). The 461-residue stretch at 671-1131 (KDFVNKELIL…PTTSLWLKDL (461 aa)) folds into the Topo IIA-type catalytic domain. Y761 functions as the O-(5'-phospho-DNA)-tyrosine intermediate in the catalytic mechanism. An interaction with DNA region spans residues 947–956 (KLTSTISTSN). Disordered stretches follow at residues 1040-1077 (PMPR…SVSV) and 1147-1462 (EDDR…EDDD). Acidic residues predominate over residues 1056 to 1068 (NDDDSEEQEDAEP). Residues 1167–1181 (PAKKPPQPRKNTKKA) show a composition bias toward basic residues. Low complexity predominate over residues 1198–1207 (AVEAAKPAEV). Positions 1240–1250 (IESSGEKSQAM) are enriched in polar residues. Residues 1260 to 1275 (AGKKQNNKRGGAKKKS) show a composition bias toward basic residues. Acidic residues predominate over residues 1282–1300 (SDSDNEVNDVDDDDDDFEE). 2 stretches are compositionally biased toward low complexity: residues 1314-1334 (KPAA…APAA) and 1419-1430 (APQPARARPQRA). Residues 1442 to 1462 (SESEEDSDEDAELSDFEEDDD) show a composition bias toward acidic residues.

It belongs to the type II topoisomerase family. As to quaternary structure, homodimer. Requires Mg(2+) as cofactor. The cofactor is Mn(2+). Ca(2+) serves as cofactor. In terms of tissue distribution, abundant in proliferative tissues.

The catalysed reaction is ATP-dependent breakage, passage and rejoining of double-stranded DNA.. In terms of biological role, control of topological states of DNA by transient breakage and subsequent rejoining of DNA strands. Topoisomerase II makes double-strand breaks. This Pisum sativum (Garden pea) protein is DNA topoisomerase 2 (TOP2).